We begin with the raw amino-acid sequence, 931 residues long: Netrin receptor UNC5C (931 aa).

The first 39 residues, Met1–Ala39, serve as a signal peptide directing secretion. Residues Ala40–Tyr380 are Extracellular-facing. Residues Pro62 to Tyr159 form the Ig-like domain. Intrachain disulfides connect Cys83/Cys144, Cys95/Cys142, Cys188/Cys239, Cys272/Cys309, Cys276/Cys313, Cys287/Cys299, Cys328/Cys362, Cys332/Cys367, and Cys340/Cys352. The 96-residue stretch at Arg161–Ile256 folds into the Ig-like C2-type domain. N-linked (GlcNAc...) asparagine glycosylation occurs at Asn236. TSP type-1 domains are found at residues Asn260–Pro314 and Asp316–Met368. A glycan (N-linked (GlcNAc...) asparagine) is linked at Asn361. Residues Val381–Val401 form a helical membrane-spanning segment. At Tyr402–Tyr931 the chain is on the cytoplasmic side. The ZU5 domain occupies Cys530–Leu664. One can recognise a Death domain in the interval Gln850–Gly929.

It belongs to the unc-5 family. In terms of tissue distribution, restricted to proprioceptive neurons.

Its subcellular location is the cell membrane. It is found in the cell surface. It localises to the synapse. The protein localises to the synaptosome. The protein resides in the cell projection. Its subcellular location is the axon. It is found in the dendrite. It localises to the growth cone. The protein localises to the lamellipodium. The protein resides in the filopodium. Receptor for netrin required for axon guidance. Mediates axon repulsion of neuronal growth cones in the developing nervous system upon ligand binding. Involved in dorsal root ganglion axon projection towards the spinal cord. The chain is Netrin receptor UNC5C (UNC5C) from Gallus gallus (Chicken).